Here is a 217-residue protein sequence, read N- to C-terminus: Carbon disulfide hydrolase (217 aa).

3 residues coordinate Zn(2+): Cys39, His98, and Cys101. Residues 192-217 (DKEKRARTDCTPTPYGVKGNQPPRWK) form a disordered region.

Belongs to the beta-class carbonic anhydrase family. As to quaternary structure, forms only homooctamers in solution. Requires Zn(2+) as cofactor.

The catalysed reaction is carbon disulfide + 2 H2O = 2 hydrogen sulfide + CO2 + 2 H(+). It functions in the pathway sulfur metabolism; hydrogen sulfide biosynthesis. Its function is as follows. Catalyzes the conversion of carbon disulfide into hydrogen sulfide and carbon dioxide, with carbonyl sulfide as an intermediate. Likely plays a key role in sulfur metabolism that allows A.thiooxidans S1p to grow on carbon disulfide as the main carbon and energy source. Does not show carbonic anhydrase activity (hydration of CO(2) to carbonate). The polypeptide is Carbon disulfide hydrolase (Acidithiobacillus thiooxidans (Thiobacillus thiooxidans)).